The primary structure comprises 245 residues: Ninjurin-A (245 aa).

The Extracellular segment spans residues 1-170 (MSNLEHITLE…TSSQHPYFYP (170 aa)). Asn19 and Asn28 each carry an N-linked (GlcNAc...) asparagine glycan. Positions 32-101 (HSYGGAIDGR…NVNVNVPNGG (70 aa)) are disordered. Residues 92–101 (NVNVNVPNGG) show a composition bias toward low complexity. Positions 135 to 146 (KKTLAQGMMDLA) are helix alpha1. Residues 149–165 (SANANQLRYVLETSSQH) form a helix alpha2 region. The chain crosses the membrane as a helical span at residues 171–191 (SLLFISLSIIFQIAVGVGLIL). At 192–211 (NGQYNIKNGHDICRANRINN) the chain is on the cytoplasmic side. Residues 212–232 (YTVSGIFIVTVVNVLISAFTV) form a helical membrane-spanning segment. Residues 233-245 (DRDTVPALPANTT) are Extracellular-facing.

It belongs to the ninjurin family. As to quaternary structure, homooligomer. Cleaved by Mmp1 protease to generate the Secreted ninjurin-A form.

The protein localises to the cell membrane. It is found in the secreted. Its function is as follows. Effector of non-apoptotic necrotic cell death that mediates plasma membrane rupture (cytolysis): oligomerizes in response to death stimuli and promotes plasma membrane rupture by introducing hydrophilic faces of 2 alpha helices into the hydrophobic membrane, leading to release intracellular molecules that propagate the inflammatory response. Also acts as a homophilic transmembrane adhesion molecule that promotes cell adhesion by mediating homophilic interactions via its extracellular region. In terms of biological role, secreted form generated by cleavage, which acts as a negative regulator of cell adhesion. Promotes the loss of cell adhesion in a cell non-autonomous manner. The sequence is that of Ninjurin-A from Drosophila melanogaster (Fruit fly).